The following is a 378-amino-acid chain: Cell death-related nuclease 6 (378 aa).

Residues 1–17 (MIRQIILIVSLIGISNA) form the signal peptide. Residues N51, N92, and N111 are each glycosylated (N-linked (GlcNAc...) asparagine).

It belongs to the DNase II family.

Functionally, involved in apoptotic DNA degradation. The polypeptide is Cell death-related nuclease 6 (crn-6) (Caenorhabditis elegans).